Consider the following 431-residue polypeptide: MGKRLDQPQMYPQYTYYCPQYLQTKQSYAPAPHPMAPPSPSTNSSSNSSGEQLSKTNLYIRGLPPGTTDQDLIKLCQPYGKIVSTKAILDKNTNQCKGYGFVDFDSPAAAQKAVASLKANGVQAQMAKQQEQDPTNLYISNLPISMDEQELENMLKPFGHVISTRILRDANGVSRGVGFARMESTEKCEVVIQHFNGKYLKTPPGIPAPSEPLLCKFADGGQKKRQGQSKHTQNGRPWPREGEAGMALTYDPTAALQNGFYSSPYSLATNRMIPQTSITPFIAASPVSTYQVQSTSWTPHLPYIMQPTGAVITPAVDHPMSMQPTNIVGPLTQQMNHLSLGTAGTIQSQDRIMVLHQLLCQYMTAAPMQGTYIPQYTPVPPTAVSIEGVVADTSPQTVAPSSQDSSGQQQQLAVDTPSEHAPAYSFQQSKP.

The interval 28–53 is disordered; sequence YAPAPHPMAPPSPSTNSSSNSSGEQL. Positions 31–40 are enriched in pro residues; that stretch reads APHPMAPPSP. RRM domains are found at residues 56-129 and 135-220; these read TNLY…MAKQ and TNLY…FADG. 2 disordered regions span residues 220–242 and 393–431; these read GGQK…PREG and TSPQ…QSKP. The span at 401-411 shows a compositional bias: low complexity; it reads SSQDSSGQQQQ.

It localises to the cytoplasm. Functionally, binds poly(A) and poly(U) oligoribonucleotides. The protein is RNA-binding motif, single-stranded-interacting protein 3 (Rbms3) of Mus musculus (Mouse).